We begin with the raw amino-acid sequence, 193 residues long: Fibrillarin-like rRNA/tRNA 2'-O-methyltransferase (193 aa).

Residues 82–83, 100–101, 125–126, and 145–148 each bind S-adenosyl-L-methionine; these read TT, EF, DA, and DVAQ.

Belongs to the methyltransferase superfamily. Fibrillarin family. Interacts with nop5. Component of box C/D small ribonucleoprotein (sRNP) particles that contain rpl7ae, FlpA and nop5, plus a guide RNA.

Its function is as follows. Involved in pre-rRNA and tRNA processing. Utilizes the methyl donor S-adenosyl-L-methionine to catalyze the site-specific 2'-hydroxyl methylation of ribose moieties in rRNA and tRNA. Site specificity is provided by a guide RNA that base pairs with the substrate. Methylation occurs at a characteristic distance from the sequence involved in base pairing with the guide RNA. This Methanosarcina mazei (Methanosarcina frisia) protein is Fibrillarin-like rRNA/tRNA 2'-O-methyltransferase.